The primary structure comprises 186 residues: Ribosome-recycling factor (186 aa).

This sequence belongs to the RRF family.

It localises to the cytoplasm. Responsible for the release of ribosomes from messenger RNA at the termination of protein biosynthesis. May increase the efficiency of translation by recycling ribosomes from one round of translation to another. The chain is Ribosome-recycling factor from Burkholderia ambifaria (strain ATCC BAA-244 / DSM 16087 / CCUG 44356 / LMG 19182 / AMMD) (Burkholderia cepacia (strain AMMD)).